The chain runs to 323 residues: Methionyl-tRNA formyltransferase (323 aa).

(6S)-5,6,7,8-tetrahydrofolate is bound at residue 113 to 116 (SLLP).

The protein belongs to the Fmt family.

The catalysed reaction is L-methionyl-tRNA(fMet) + (6R)-10-formyltetrahydrofolate = N-formyl-L-methionyl-tRNA(fMet) + (6S)-5,6,7,8-tetrahydrofolate + H(+). Functionally, attaches a formyl group to the free amino group of methionyl-tRNA(fMet). The formyl group appears to play a dual role in the initiator identity of N-formylmethionyl-tRNA by promoting its recognition by IF2 and preventing the misappropriation of this tRNA by the elongation apparatus. In Nitrosococcus oceani (strain ATCC 19707 / BCRC 17464 / JCM 30415 / NCIMB 11848 / C-107), this protein is Methionyl-tRNA formyltransferase.